We begin with the raw amino-acid sequence, 310 residues long: tRNA-cytidine(32) 2-sulfurtransferase (310 aa).

Positions 45-50 match the PP-loop motif motif; that stretch reads SGGKDS. Cys-120, Cys-123, and Cys-211 together coordinate [4Fe-4S] cluster.

The protein belongs to the TtcA family. As to quaternary structure, homodimer. Requires Mg(2+) as cofactor. It depends on [4Fe-4S] cluster as a cofactor.

The protein resides in the cytoplasm. It catalyses the reaction cytidine(32) in tRNA + S-sulfanyl-L-cysteinyl-[cysteine desulfurase] + AH2 + ATP = 2-thiocytidine(32) in tRNA + L-cysteinyl-[cysteine desulfurase] + A + AMP + diphosphate + H(+). Its pathway is tRNA modification. Catalyzes the ATP-dependent 2-thiolation of cytidine in position 32 of tRNA, to form 2-thiocytidine (s(2)C32). The sulfur atoms are provided by the cysteine/cysteine desulfurase (IscS) system. The polypeptide is tRNA-cytidine(32) 2-sulfurtransferase (Shewanella sp. (strain ANA-3)).